A 209-amino-acid polypeptide reads, in one-letter code: Na(+)-translocating NADH-quinone reductase subunit D (209 aa).

The next 5 membrane-spanning stretches (helical) occupy residues 42–62 (LVMT…ISLI), 72–92 (IIVQ…ILQA), 103–123 (VFVG…AYAM), 131–151 (FMDG…VGFL), and 178–198 (NGLF…IWGL).

It belongs to the NqrDE/RnfAE family. Composed of six subunits; NqrA, NqrB, NqrC, NqrD, NqrE and NqrF.

It localises to the cell inner membrane. The enzyme catalyses a ubiquinone + n Na(+)(in) + NADH + H(+) = a ubiquinol + n Na(+)(out) + NAD(+). In terms of biological role, NQR complex catalyzes the reduction of ubiquinone-1 to ubiquinol by two successive reactions, coupled with the transport of Na(+) ions from the cytoplasm to the periplasm. NqrA to NqrE are probably involved in the second step, the conversion of ubisemiquinone to ubiquinol. The protein is Na(+)-translocating NADH-quinone reductase subunit D of Photorhabdus laumondii subsp. laumondii (strain DSM 15139 / CIP 105565 / TT01) (Photorhabdus luminescens subsp. laumondii).